The following is a 334-amino-acid chain: L-lactate dehydrogenase B chain (334 aa).

Alanine 2 is modified (N-acetylalanine). Position 7 is an N6-acetyllysine (lysine 7). Position 44 is a phosphoserine (serine 44). NAD(+) is bound by residues 53–58 (DVLEDK) and arginine 100. The residue at position 58 (lysine 58) is an N6-acetyllysine. Residue arginine 107 participates in substrate binding. N6-acetyllysine is present on lysine 119. Asparagine 139 provides a ligand contact to NAD(+). 2 residues coordinate substrate: asparagine 139 and arginine 170. Catalysis depends on histidine 194, which acts as the Proton acceptor. Phosphotyrosine is present on tyrosine 240. Threonine 249 contributes to the substrate binding site. At lysine 329 the chain carries N6-acetyllysine.

Belongs to the LDH/MDH superfamily. LDH family. Homotetramer. Interacts with PTEN upstream reading frame protein MP31; the interaction leads to inhibition of mitochondrial lactate dehydrogenase activity, preventing conversion of lactate to pyruvate in mitochondria.

The protein resides in the cytoplasm. Its subcellular location is the mitochondrion inner membrane. It catalyses the reaction (S)-lactate + NAD(+) = pyruvate + NADH + H(+). The protein operates within fermentation; pyruvate fermentation to lactate; (S)-lactate from pyruvate: step 1/1. Functionally, interconverts simultaneously and stereospecifically pyruvate and lactate with concomitant interconversion of NADH and NAD(+). The chain is L-lactate dehydrogenase B chain (LDHB) from Monodelphis domestica (Gray short-tailed opossum).